Here is a 214-residue protein sequence, read N- to C-terminus: MNTSISEIQRFLSMIAFEKELVSEDFSVVAGIDEAGRGPLAGPVVASACILPKGKVFPGVNDSKKLSPKQRAQVRDALMQDPEVCFGIGVISVERIDQVNILEATKEAMLQAISSLPISPDILLVDGLYLPHDIPCKKIIQGDAKSASIAAASILAKEHRDDLMLQLHRLYPEYGFDRHKGYGTSLHVEAIRRYGPSPCHRKSFSPIKQMCAIV.

Residues 27-214 (SVVAGIDEAG…SPIKQMCAIV (188 aa)) form the RNase H type-2 domain. Residues Asp-33, Glu-34, and Asp-126 each contribute to the a divalent metal cation site.

The protein belongs to the RNase HII family. Mn(2+) serves as cofactor. It depends on Mg(2+) as a cofactor.

Its subcellular location is the cytoplasm. It catalyses the reaction Endonucleolytic cleavage to 5'-phosphomonoester.. Functionally, endonuclease that specifically degrades the RNA of RNA-DNA hybrids. The protein is Ribonuclease HII (rnhB) of Chlamydia pneumoniae (Chlamydophila pneumoniae).